Reading from the N-terminus, the 20-residue chain is Unknown protein NF045 from 2D-PAGE (20 aa).

The protein is Unknown protein NF045 from 2D-PAGE of Naegleria fowleri (Brain eating amoeba).